Here is a 3166-residue protein sequence, read N- to C-terminus: Intermembrane lipid transfer protein VPS13A (3166 aa).

A Chorein N-terminal domain is found at 3 to 116; the sequence is FESVVVEVLN…LMETKQQELK (114 aa). TPR repeat units follow at residues 212–245 and 373–406; these read LFAY…ENIV and LTSK…QQAE. Thr-831 carries the phosphothreonine modification. Ser-835 carries the phosphoserine modification. The FFAT signature appears at 838-844; that stretch reads EFFDAPC. Residues 1343–1359 show a composition bias toward polar residues; that stretch reads APSSANKDPETMTSGVT. A disordered region spans residues 1343–1365; it reads APSSANKDPETMTSGVTSPPDHS. A Phosphoserine modification is found at Ser-1410. TPR repeat units follow at residues 1806 to 1840 and 1999 to 2034; these read AIVE…TLSK and ISVF…VPED. Positions 2202–2447 constitute an SHR-BD domain; it reads VAFHSPYWMV…VYYTWADPVG (246 aa). 2 required for mitochondrial localization regions span residues 2607-3166 and 2743-3166; these read LQPH…SPRL and EYEV…SPRL. TPR repeat units lie at residues 2716-2750 and 2852-2890; these read ADLV…VSSV and ILGL…PEEF. A required for lipid droplet localization region spans residues 2945–3019; sequence PAGLREGITR…SSTFQGIKRA (75 aa).

It belongs to the VPS13 family. Interacts (via FFAT motif) with VAPA and VAPB. Interacts with RAB7A. Interacts with XK.

It localises to the mitochondrion outer membrane. The protein resides in the endoplasmic reticulum membrane. It is found in the endosome membrane. The protein localises to the lysosome membrane. Its subcellular location is the lipid droplet. It localises to the golgi apparatus. The protein resides in the cytoplasmic vesicle. It is found in the secretory vesicle. The protein localises to the neuronal dense core vesicle. In terms of biological role, mediates the transfer of lipids between membranes at organelle contact sites. Required for the formation or stabilization of ER-mitochondria contact sites which enable transfer of lipids between the ER and mitochondria. Negatively regulates lipid droplet size and motility. Required for efficient lysosomal protein degradation. The polypeptide is Intermembrane lipid transfer protein VPS13A (Mus musculus (Mouse)).